The primary structure comprises 366 residues: UDP-N-acetylglucosamine 2-epimerase (366 aa).

The active site involves His-207.

This sequence belongs to the UDP-N-acetylglucosamine 2-epimerase family. Homodimer.

It is found in the cytoplasm. The catalysed reaction is UDP-N-acetyl-alpha-D-glucosamine = UDP-N-acetyl-alpha-D-mannosamine. Its function is as follows. Catalyzes the reversible epimerization at C-2 of UDP-N-acetylglucosamine (UDP-GlcNAc) to produce UDP-N-acetylmannosamine (UDP-ManNAc), the activated donor of ManNAc residues. The polypeptide is UDP-N-acetylglucosamine 2-epimerase (wecB) (Methanocaldococcus jannaschii (strain ATCC 43067 / DSM 2661 / JAL-1 / JCM 10045 / NBRC 100440) (Methanococcus jannaschii)).